The following is a 435-amino-acid chain: Histidine--tRNA ligase (435 aa).

This sequence belongs to the class-II aminoacyl-tRNA synthetase family. Homodimer.

It is found in the cytoplasm. The enzyme catalyses tRNA(His) + L-histidine + ATP = L-histidyl-tRNA(His) + AMP + diphosphate + H(+). This chain is Histidine--tRNA ligase, found in Synechococcus elongatus (strain ATCC 33912 / PCC 7942 / FACHB-805) (Anacystis nidulans R2).